The following is a 140-amino-acid chain: MPKKGKGKPAFSRRRIATGLQVGSYVRVADNSGAKLVKIIGVPGYKGRLRRIPPAGIGDLVVVTVKKGTPEMRKQVVKAVIVRQKRPFRRPDGTWVAFEDNAVAIVTPEGTPKGSEIRGPIAKEVAERWPQLANIATIVV.

Belongs to the universal ribosomal protein uL14 family. As to quaternary structure, part of the 50S ribosomal subunit. Forms a cluster with proteins L3 and L24e, part of which may contact the 16S rRNA in 2 intersubunit bridges.

Binds to 23S rRNA. Forms part of two intersubunit bridges in the 70S ribosome. This Staphylothermus marinus (strain ATCC 43588 / DSM 3639 / JCM 9404 / F1) protein is Large ribosomal subunit protein uL14.